We begin with the raw amino-acid sequence, 157 residues long: SsrA-binding protein (157 aa).

The protein belongs to the SmpB family.

The protein localises to the cytoplasm. Required for rescue of stalled ribosomes mediated by trans-translation. Binds to transfer-messenger RNA (tmRNA), required for stable association of tmRNA with ribosomes. tmRNA and SmpB together mimic tRNA shape, replacing the anticodon stem-loop with SmpB. tmRNA is encoded by the ssrA gene; the 2 termini fold to resemble tRNA(Ala) and it encodes a 'tag peptide', a short internal open reading frame. During trans-translation Ala-aminoacylated tmRNA acts like a tRNA, entering the A-site of stalled ribosomes, displacing the stalled mRNA. The ribosome then switches to translate the ORF on the tmRNA; the nascent peptide is terminated with the 'tag peptide' encoded by the tmRNA and targeted for degradation. The ribosome is freed to recommence translation, which seems to be the essential function of trans-translation. The polypeptide is SsrA-binding protein (Rhodococcus jostii (strain RHA1)).